The following is a 232-amino-acid chain: MTTSLIHMANHLDASTEEISLNYVLLGHPHHERAQHHPSYMDMIKGAIQAIDNGTGSSKAAILKYIAQNYHVGENLPKVNNHLRSVLKKAVDSGDIEQTRGHGATGSFRMGKECEKNLQVGIPVQTKPMLMLKEVRQKLENISKAEKTKPSTSSMSTNKKGKPISTMKKRGVMSKKRSSKNKMAPKAKSHGLKKKGPATKSSGLVHKAAGAKNEAAPTTKMELRTGTRKSYC.

One can recognise an H15 domain in the interval 36-112 (HHPSYMDMIK…GATGSFRMGK (77 aa)). The segment at 142–232 (ISKAEKTKPS…LRTGTRKSYC (91 aa)) is disordered. Over residues 159 to 197 (KKGKPISTMKKRGVMSKKRSSKNKMAPKAKSHGLKKKGP) the composition is skewed to basic residues.

Belongs to the histone H1/H5 family.

Its subcellular location is the nucleus. The protein resides in the chromosome. The sequence is that of Histone H1.X (hil-1) from Caenorhabditis elegans.